Here is a 1072-residue protein sequence, read N- to C-terminus: Vacuolar membrane protease (1072 aa).

The Cytoplasmic segment spans residues 1 to 9; the sequence is MINPISFRP. Residues 10 to 30 form a helical membrane-spanning segment; it reads GPVTFWTTLIYLALLIPIVII. The Vacuolar segment spans residues 31–404; the sequence is NEKTPAAPKT…SFVLFGLRGM (374 aa). 4 N-linked (GlcNAc...) asparagine glycosylation sites follow: N48, N116, N119, and N128. Positions 185 and 197 each coordinate Zn(2+). E231 acts as the Proton acceptor in catalysis. E232, E257, and H330 together coordinate Zn(2+). A helical membrane pass occupies residues 405 to 425; the sequence is FAWSLTLLIATPLVLVGITWL. Residues 426–457 are Cytoplasmic-facing; the sequence is LRNLDKDYFFTSTVKTKEHPEYEAVPIGGWKG. A helical transmembrane segment spans residues 458–478; it reads FFRFPFALGVAVFFTISSALL. The Vacuolar portion of the chain corresponds to 479–492; sequence MNKVNPLIVYSSRY. The helical transmembrane segment at 493–513 threads the bilayer; it reads SVWVMMVSIFYFSFWMIMRGA. At 514 to 523 the chain is on the cytoplasmic side; sequence NFVRPSALHR. The helical transmembrane segment at 524–544 threads the bilayer; sequence GYANLWLFVFGWIVLVAVTAL. At 545–554 the chain is on the vacuolar side; sequence EDRRRIAAGY. Residues 555–575 form a helical membrane-spanning segment; it reads IFVFLESAIFLSCLISFVELL. At 576–747 the chain is on the cytoplasmic side; that stretch reads AVPRKSSYAL…YDHEQEWSGH (172 aa). The segment at 593-713 is disordered; it reads GQEHDHNGYQ…GTNDRGRTTF (121 aa). Positions 606-617 are enriched in basic and acidic residues; sequence DSTDEPSLRARA. Positions 643 to 661 are enriched in polar residues; the sequence is GTTNGLSTAPSVAAHSSQP. A helical membrane pass occupies residues 748 to 768; that stretch reads LPSWAWFFQFLLLGPFMIILA. The Vacuolar portion of the chain corresponds to 769 to 789; that stretch reads AQTGLMLTDAVYQTGSDGSKL. The chain crosses the membrane as a helical span at residues 790-810; that stretch reads ITPYLIIFVFTVLLILPLTPF. The Cytoplasmic segment spans residues 811 to 817; that stretch reads IHRVTHH. Residues 818-838 traverse the membrane as a helical segment; that stretch reads IPVFLLVVFIVTLTYNLIAFP. The Vacuolar portion of the chain corresponds to 839 to 1072; the sequence is FSANNRYKTF…VEGRKAFKIV (234 aa). N932 and N974 each carry an N-linked (GlcNAc...) asparagine glycan.

Belongs to the peptidase M28 family. Requires Zn(2+) as cofactor.

The protein resides in the vacuole membrane. May be involved in vacuolar sorting and osmoregulation. The sequence is that of Vacuolar membrane protease from Neurospora crassa (strain ATCC 24698 / 74-OR23-1A / CBS 708.71 / DSM 1257 / FGSC 987).